A 295-amino-acid polypeptide reads, in one-letter code: Diaminopimelate epimerase (295 aa).

Residues Asn11 and Asn78 each contribute to the substrate site. Catalysis depends on Cys87, which acts as the Proton donor. Substrate contacts are provided by residues 88–89 (GN), Asn163, Asn199, and 220–221 (ER). Cys229 acts as the Proton acceptor in catalysis. Residue 230–231 (GT) participates in substrate binding.

The protein belongs to the diaminopimelate epimerase family. In terms of assembly, homodimer.

It is found in the cytoplasm. It carries out the reaction (2S,6S)-2,6-diaminopimelate = meso-2,6-diaminopimelate. The protein operates within amino-acid biosynthesis; L-lysine biosynthesis via DAP pathway; DL-2,6-diaminopimelate from LL-2,6-diaminopimelate: step 1/1. Its function is as follows. Catalyzes the stereoinversion of LL-2,6-diaminopimelate (L,L-DAP) to meso-diaminopimelate (meso-DAP), a precursor of L-lysine and an essential component of the bacterial peptidoglycan. The chain is Diaminopimelate epimerase from Mycobacteroides abscessus (strain ATCC 19977 / DSM 44196 / CCUG 20993 / CIP 104536 / JCM 13569 / NCTC 13031 / TMC 1543 / L948) (Mycobacterium abscessus).